Here is a 462-residue protein sequence, read N- to C-terminus: Proteases secretion protein PrtF (462 aa).

The N-terminal stretch at Met-1–Gly-23 is a signal peptide.

The protein belongs to the outer membrane factor (OMF) (TC 1.B.17) family.

Its subcellular location is the cell outer membrane. Functionally, involved in the secretion of proteases A, B, C and G. This is Proteases secretion protein PrtF (prtF) from Dickeya chrysanthemi (Pectobacterium chrysanthemi).